A 378-amino-acid polypeptide reads, in one-letter code: MLETVTDVASFVHYGNTSVFPTADNSSEIIPDGESNISKPHRCLQVLYDDIGTSRVRYWDVMLLIPNVAFLVFLMWKLPSARAKIRLTSSPIFVAFYILVFVVAAVGITRAIVSMTVSTSSAATLIDKVLWEITRFFLLAIELSVIILGLAFGHLESKSSIKRVLAITAVLSLAYSITQGTLEIRFPDKHLSAKDFNIYGHGGRHFWLASSCFFFLVYSLIVILPKTPIRERISLPSKRSFYVYSGILALLNLVQGLGSALLCADIIEGLCCVDVTTFLYFSVFAPLIYVTFLKGFFGSEPKILFSYKSQIDEPEDSDVHLPHTSSSGLGRKDLDRGSYSSTQIDGSGAYLDDVVSGPFGGAHSINSVDSDRWRSINT.

N-linked (GlcNAc...) asparagine glycans are attached at residues Asn-16, Asn-25, and Asn-36. 7 consecutive transmembrane segments (helical) span residues Val-61 to Ala-81, Thr-88 to Ile-108, Phe-136 to Glu-156, Val-164 to Ile-184, His-205 to Pro-225, Ile-247 to Ile-267, and Phe-278 to Gly-298. The tract at residues Asp-316 to Asp-335 is disordered.

This sequence belongs to the UPF0359 family.

It is found in the membrane. The polypeptide is Transmembrane protein adipocyte-associated 1 homolog (tpra1) (Danio rerio (Zebrafish)).